A 173-amino-acid polypeptide reads, in one-letter code: Protein-export protein SecB (173 aa).

It belongs to the SecB family. In terms of assembly, homotetramer, a dimer of dimers. One homotetramer interacts with 1 SecA dimer.

Its subcellular location is the cytoplasm. One of the proteins required for the normal export of preproteins out of the cell cytoplasm. It is a molecular chaperone that binds to a subset of precursor proteins, maintaining them in a translocation-competent state. It also specifically binds to its receptor SecA. This Ralstonia nicotianae (strain ATCC BAA-1114 / GMI1000) (Ralstonia solanacearum) protein is Protein-export protein SecB.